The sequence spans 79 residues: uncharacterized protein (79 aa).

Belongs to the asfivirus D79L family.

This is an uncharacterized protein from Ornithodoros (relapsing fever ticks).